A 99-amino-acid chain; its full sequence is Teretoxin Tsu6.4 (99 aa).

An N-terminal signal peptide occupies residues Met-1–Glu-21. A propeptide spanning residues Glu-22–Arg-53 is cleaved from the precursor.

Post-translationally, contains 3 disulfide bonds. In terms of tissue distribution, expressed by the venom duct.

Its subcellular location is the secreted. In Terebra subulata (Chocolate spotted auger), this protein is Teretoxin Tsu6.4.